A 143-amino-acid polypeptide reads, in one-letter code: Large ribosomal subunit protein uL11 (143 aa).

Belongs to the universal ribosomal protein uL11 family. In terms of assembly, part of the ribosomal stalk of the 50S ribosomal subunit. Interacts with L10 and the large rRNA to form the base of the stalk. L10 forms an elongated spine to which L12 dimers bind in a sequential fashion forming a multimeric L10(L12)X complex. In terms of processing, one or more lysine residues are methylated.

Forms part of the ribosomal stalk which helps the ribosome interact with GTP-bound translation factors. This is Large ribosomal subunit protein uL11 from Psychrobacter cryohalolentis (strain ATCC BAA-1226 / DSM 17306 / VKM B-2378 / K5).